A 450-amino-acid chain; its full sequence is Malate:quinone oxidoreductase (450 aa).

This sequence belongs to the MQO family. The cofactor is FAD.

The protein resides in the cell membrane. The enzyme catalyses (S)-malate + a quinone = a quinol + oxaloacetate. The protein operates within carbohydrate metabolism; tricarboxylic acid cycle; oxaloacetate from (S)-malate (quinone route): step 1/1. In terms of biological role, catalyzes oxidation of malate to oxaloacetate in the citric acid cycle. Donates electrons to quinones of the electron transfer chain. This chain is Malate:quinone oxidoreductase (mqo), found in Helicobacter pylori (strain ATCC 700392 / 26695) (Campylobacter pylori).